We begin with the raw amino-acid sequence, 386 residues long: MNSLQVLTKKVLIETKAFSNYHEDDIFILQQLGLWWENGPIGFCKQCKMVTSGSMSCSDVDSYELDRALVKAVKENQTDLIKLFVLWGADINFGIICAKTKQTKDLCIQLGADPEFLDVGLYNMFVYLVKRKKVLLAIEIYYDNISILDSFDSHDFHVLIDFVYNRFILYLDEKEKEMTRNTLVLRFWYKFAIDFKLTKPIRYLSKKFPHLDLWRLQTAIYLGNIDEVHHAYFQENIRLRLNVMMFLACARPGNKLGIYYCFALGADLDHALERLISFNSINREINRKISGKTRLCIEGSYLSNIYFCIGLGANPYTKKIQETIKQKNSNIMILLYSKKKILSPHSVLQNKILDPSDVYKMISTYKNTESFYPFSSLAVKLIQQAK.

Belongs to the asfivirus MGF 360 family.

Functionally, plays a role in virus cell tropism, and may be required for efficient virus replication in macrophages. The protein is Protein MGF 360-4L of Ornithodoros (relapsing fever ticks).